The following is a 607-amino-acid chain: Rap1 GTPase-GDP dissociation stimulator 1 (607 aa).

The Nuclear export signal (NES) motif lies at 4–13 (LSDTLKKLKI). ARM repeat units lie at residues 89 to 131 (GLIS…DQAG) and 170 to 211 (DSLQ…NLAE). Residues 122-170 (EGRSAVDQAGGAQIVIDHLRSLCSITDPANEKLLTVFCGMLMNYSNEND) form a prevents binding to prenylated RHOA region. Lys-230 is modified (N6-acetyllysine). Residues 239–255 (DKREMIFEVLAPLAEND) form an interacts with polybasic regions in GTPases region. ARM repeat units follow at residues 347-390 (DANC…NLAI), 391-431 (PVIN…MLID), and 479-519 (SKDV…LIAA). Positions 379–428 (HAALSALRNLAIPVINKAKMLSAGVTEAVLKFLKSEMPPVQFKLLGTLRM) are critical for catalytic activity.

Interacts with RABL3. Interacts with RHOT1. In terms of assembly, interacts with unprenylated RHOA; the interaction is direct. Interacts with RAP1A. Interacts with KRAS. Interacts with RAC1. Interacts with RAP1B. Preferentially interacts with unprenylated GTPases that will become geranylgeranylated. May also interact with prenylated GTPases. As to quaternary structure, interacts with prenylated RHOA; the interaction is direct and in a 1:1 stoichiometry. Interacts with RAP1A. Interacts with KRAS. Interacts with RAC1. Interacts with RAP1B. Preferentially interacts with prenylated GTPases. Post-translationally, forms covalent cross-links mediated by transglutaminase TGM2, between a glutamine and the epsilon-amino group of a lysine residue, forming homopolymers and heteropolymers.

The protein resides in the cytoplasm. It localises to the cytosol. It is found in the endoplasmic reticulum. The protein localises to the mitochondrion. Its subcellular location is the nucleus. Its function is as follows. Acts as a GEF (guanine nucleotide exchange factor) for the Rho family of small GTP-binding proteins (G proteins) that stimulates the dissociation of GDP to enable subsequent binding of GTP. Additionally, appears to chaperone the processing and/or trafficking of small GTPases containing a C-terminal polybasic region independently of GEF activity. Targets include RAP1A/RAP1B, RHOA, RHOB, RHOC, RAC1 and KRAS. Regulates mitochondrial dynamics by controlling RHOT function to promote mitochondrial fission during high calcium conditions. Able to promote the Ca(2+) release from the endoplasmic reticulum via both inositol trisphosphate (Ins3P) and ryanodine sensitive receptors leading to a enhanced mitochondrial Ca(2+) uptake. In terms of biological role, acts as a GEF (guanine nucleotide exchange factor) for unprenylated RHOA. Chaperones the entry and passage of small GTPases through the prenylation pathway. Recognizes the last amino acid in the GTPase C-terminal CAAX motif with a preference for 'Leu' over 'Met', indicating involvement in the geranylgeranylation pathway. Functionally, acts as a GEF (guanine nucleotide exchange factor) for prenylated RHOA. Acts as a GEF for RHOC. Chaperones the downstream trafficking and/or processing of small newly prenylated GTPases. Escorts RAC1 to the nucleus. The polypeptide is Rap1 GTPase-GDP dissociation stimulator 1 (Homo sapiens (Human)).